A 930-amino-acid polypeptide reads, in one-letter code: RNA-binding protein 10 (930 aa).

Basic and acidic residues-rich tracts occupy residues 1-14 (MEYE…DRTG) and 21-45 (RSQD…RSYP). Residues 1-127 (MEYERRGGRG…EDEEEEEEKA (127 aa)) are disordered. Residues 59–70 (DSSEEQSAEDSY) are compositionally biased toward acidic residues. Phosphoserine is present on residues serine 61 and serine 89. A compositionally biased stretch (basic residues) spans 80 to 89 (RRRRRRHRHS). A compositionally biased stretch (basic and acidic residues) spans 98-111 (RDGDYRDQDYRTEQ). The span at 112–125 (GEEEEEEDEEEEEE) shows a compositional bias: acidic residues. Residues 129–209 (NIVMLRMLPQ…QKVSMHYSDP (81 aa)) enclose the RRM 1 domain. Residues 212-242 (KINEDWLCNKCGVQNFKRREKCFKCGVPKSE) form a RanBP2-type zinc finger. The region spanning 300–384 (DTIILRNLNP…KTINVEFAKG (85 aa)) is the RRM 2 domain. Lysine 383 bears the N6-acetyllysine mark. Disordered regions lie at residues 464–487 (GPGM…EAGA), 503–522 (APGL…TATN), 537–566 (ELQS…QYPV), 620–646 (EQSA…HKTK), and 712–753 (DLPK…EEKL). Residues 507 to 522 (YQQSAEGSSGQSTATN) show a composition bias toward polar residues. Residues 540–562 (SPTQPSSSAFPPATSPTAPEAYS) are compositionally biased toward low complexity. The segment covering 623–639 (ADGHKDTGASSKEGKEK) has biased composition (basic and acidic residues). Phosphoserine occurs at positions 718, 723, 733, 736, and 738. Positions 743–753 (ERGGPEREEKL) are enriched in basic and acidic residues. Residues 759–784 (LACLLCRRQFPSKEALIRHQQLSGLH) form a C2H2-type; atypical zinc finger. Serine 781, serine 797, and serine 845 each carry phosphoserine. A disordered region spans residues 818–861 (AAERREKYGIPEPPEPKRRKYGGISTASVDFEQPTRDGLGSDNI). Residues 858 to 904 (SDNIGSRMLQAMGWKEGSGLGRKKQGIVTPIEAQTRVRGSGLGARGS) form the G-patch domain. Arginine 902 is subject to Omega-N-methylarginine.

As to quaternary structure, associates with the spliceosome. Component of a large chromatin remodeling complex, at least composed of MYSM1, PCAF, RBM10 and KIF11/TRIP5.

The protein resides in the nucleus. Its function is as follows. Binds to ssRNA containing the consensus sequence 5'-AGGUAA-3'. May be involved in post-transcriptional processing, most probably in mRNA splicing. Binds to RNA homopolymers, with a preference for poly(G) and poly(U) and little for poly(A). May bind to specific miRNA hairpins. This is RNA-binding protein 10 from Mus musculus (Mouse).